A 130-amino-acid polypeptide reads, in one-letter code: Small ribosomal subunit protein uS11 (130 aa).

The protein belongs to the universal ribosomal protein uS11 family. In terms of assembly, part of the 30S ribosomal subunit.

In terms of biological role, located on the platform of the 30S subunit. This is Small ribosomal subunit protein uS11 from Nanoarchaeum equitans (strain Kin4-M).